The sequence spans 350 residues: Uroporphyrinogen decarboxylase (350 aa).

Substrate is bound by residues 27–31, phenylalanine 46, aspartate 76, tyrosine 152, serine 207, and histidine 321; that span reads RQAGR.

This sequence belongs to the uroporphyrinogen decarboxylase family. As to quaternary structure, homodimer.

The protein resides in the cytoplasm. It catalyses the reaction uroporphyrinogen III + 4 H(+) = coproporphyrinogen III + 4 CO2. The protein operates within porphyrin-containing compound metabolism; protoporphyrin-IX biosynthesis; coproporphyrinogen-III from 5-aminolevulinate: step 4/4. Its function is as follows. Catalyzes the decarboxylation of four acetate groups of uroporphyrinogen-III to yield coproporphyrinogen-III. In Listeria monocytogenes serotype 4a (strain HCC23), this protein is Uroporphyrinogen decarboxylase.